The sequence spans 173 residues: MAIILGIDPGSRVTGYGVIRQQGRHLSYLGSGCIRTKVDDLPNRLQRIYAGILEIITQFQPDAFAIEQVFMAKNADSALKLGQARGVAILAAVNQSIPVFEYAARQVKQTVVGTGAAEKSQVQHMVRSVLKLSANPQSDAADALAIAITHCHFNQNLLRVGDPRLILARGRLR.

Catalysis depends on residues aspartate 8, glutamate 67, and aspartate 139. Residues aspartate 8, glutamate 67, and aspartate 139 each contribute to the Mg(2+) site.

The protein belongs to the RuvC family. In terms of assembly, homodimer which binds Holliday junction (HJ) DNA. The HJ becomes 2-fold symmetrical on binding to RuvC with unstacked arms; it has a different conformation from HJ DNA in complex with RuvA. In the full resolvosome a probable DNA-RuvA(4)-RuvB(12)-RuvC(2) complex forms which resolves the HJ. The cofactor is Mg(2+).

The protein resides in the cytoplasm. The catalysed reaction is Endonucleolytic cleavage at a junction such as a reciprocal single-stranded crossover between two homologous DNA duplexes (Holliday junction).. Its function is as follows. The RuvA-RuvB-RuvC complex processes Holliday junction (HJ) DNA during genetic recombination and DNA repair. Endonuclease that resolves HJ intermediates. Cleaves cruciform DNA by making single-stranded nicks across the HJ at symmetrical positions within the homologous arms, yielding a 5'-phosphate and a 3'-hydroxyl group; requires a central core of homology in the junction. The consensus cleavage sequence is 5'-(A/T)TT(C/G)-3'. Cleavage occurs on the 3'-side of the TT dinucleotide at the point of strand exchange. HJ branch migration catalyzed by RuvA-RuvB allows RuvC to scan DNA until it finds its consensus sequence, where it cleaves and resolves the cruciform DNA. This Photorhabdus laumondii subsp. laumondii (strain DSM 15139 / CIP 105565 / TT01) (Photorhabdus luminescens subsp. laumondii) protein is Crossover junction endodeoxyribonuclease RuvC.